Reading from the N-terminus, the 374-residue chain is Transcription termination factor 1, mitochondrial (374 aa).

Residues 1–37 (MASRNIWRVRRNFLFDLRGWVPQYSAEVFLKSIPFRP) constitute a mitochondrion transit peptide. Interaction with DNA regions lie at residues 146 to 147 (RS), 224 to 228 (QSTKR), 301 to 308 (SEKKFNDK), 332 to 335 (SIHT), and 361 to 368 (SQRRYEAK).

It belongs to the mTERF family. Monomer. Post-translationally, is a phosphoprotein. While the DNA-binding activity is unaffected by the phosphorylation/dephosphorylation state, only the phosphorylated form of the protein is active for termination activity. Functioning seems to be regulated by phosphorylation.

It localises to the mitochondrion. In terms of biological role, transcription termination factor. Binds to a 28 bp region within the tRNA(Leu(uur)) gene at a position immediately adjacent to and downstream of the 16S rRNA gene; this region comprises a tridecamer sequence critical for directing accurate termination. Binds DNA along the major grove and promotes DNA bending and partial unwinding. Promotes base flipping. Transcription termination activity appears to be polarized with highest specificity for transcripts initiated on the light strand. The sequence is that of Transcription termination factor 1, mitochondrial (Mterf1) from Rattus norvegicus (Rat).